Reading from the N-terminus, the 36-residue chain is Adenylate kinase (36 aa).

10–15 (GAGKGT) serves as a coordination point for ATP. Positions 30 to 36 (ATGDLFR) are NMP. The AMP site is built by Thr-31 and Arg-36.

Belongs to the adenylate kinase family. As to quaternary structure, monomer.

It is found in the cytoplasm. It carries out the reaction AMP + ATP = 2 ADP. It functions in the pathway purine metabolism; AMP biosynthesis via salvage pathway; AMP from ADP: step 1/1. Functionally, catalyzes the reversible transfer of the terminal phosphate group between ATP and AMP. Plays an important role in cellular energy homeostasis and in adenine nucleotide metabolism. This chain is Adenylate kinase (adk), found in Streptomyces griseus.